The primary structure comprises 505 residues: Activin receptor type-1B (505 aa).

The first 23 residues, 1 to 23 (MAESAGASSFFPLVVLLLAGSGG), serve as a signal peptide directing secretion. Residues 24-126 (SGPRGIQALL…EHPSMWGPVE (103 aa)) lie on the Extracellular side of the membrane. N-linked (GlcNAc...) asparagine glycosylation occurs at Asn-43. The helical transmembrane segment at 127–149 (LVGIIAGPVFLLFLIIIIVFLVI) threads the bilayer. The Cytoplasmic segment spans residues 150–505 (NYHQRVYHNR…QLSVQEDVKI (356 aa)). A GS domain is found at 177 to 206 (KTLQDLVYDLSTSGSGSGLPLFVQRTVART). Residues 207–497 (IVLQEIIGKG…LRIKKTLSQL (291 aa)) enclose the Protein kinase domain. Residues 213 to 221 (IGKGRFGEV) and Lys-234 each bind ATP. Asp-335 acts as the Proton acceptor in catalysis. Phosphotyrosine is present on Tyr-380.

Belongs to the protein kinase superfamily. TKL Ser/Thr protein kinase family. TGFB receptor subfamily. As to quaternary structure, forms an activin receptor complex with activin receptor type-2 (ACVR2A or ACVR2B). Part of a complex consisting of MAGI2/ARIP1, ACVR2A, ACVR1B and SMAD3. Interacts with SMAD2 and SMAD3. Interacts with SMAD7. Interacts with FKBP1A. Interacts with IGSF1. Interacts with CRIPTO. Interacts with TDP2. Interacts with TSC22D1/TSC-22. It depends on Mg(2+) as a cofactor. Mn(2+) serves as cofactor. Post-translationally, autophosphorylated. Phosphorylated by activin receptor type-2 (ACVR2A or ACVR2B) in response to activin-binding at serine and threonine residues in the GS domain. Phosphorylation of ACVR1B by activin receptor type-2 regulates association with SMAD7. In terms of processing, ubiquitinated. Level of ubiquitination is regulated by the SMAD7-SMURF1 complex. Ubiquitinated. As to expression, urogenital ridge, testis, ovary, brain and lungs.

Its subcellular location is the cell membrane. It carries out the reaction L-threonyl-[receptor-protein] + ATP = O-phospho-L-threonyl-[receptor-protein] + ADP + H(+). It catalyses the reaction L-seryl-[receptor-protein] + ATP = O-phospho-L-seryl-[receptor-protein] + ADP + H(+). Activin receptor type-2 (ACVR2A or ACVR2B) activates the type-1 receptor through phosphorylation of its regulatory GS domain. In terms of biological role, transmembrane serine/threonine kinase activin type-1 receptor forming an activin receptor complex with activin receptor type-2 (ACVR2A or ACVR2B). Transduces the activin signal from the cell surface to the cytoplasm and is thus regulating a many physiological and pathological processes including neuronal differentiation and neuronal survival, hair follicle development and cycling, FSH production by the pituitary gland, wound healing, extracellular matrix production, immunosuppression and carcinogenesis. Activin is also thought to have a paracrine or autocrine role in follicular development in the ovary. Within the receptor complex, type-2 receptors (ACVR2A and/or ACVR2B) act as a primary activin receptors whereas the type-1 receptors like ACVR1B act as downstream transducers of activin signals. Activin binds to type-2 receptor at the plasma membrane and activates its serine-threonine kinase. The activated receptor type-2 then phosphorylates and activates the type-1 receptor such as ACVR1B. Once activated, the type-1 receptor binds and phosphorylates the SMAD proteins SMAD2 and SMAD3, on serine residues of the C-terminal tail. Soon after their association with the activin receptor and subsequent phosphorylation, SMAD2 and SMAD3 are released into the cytoplasm where they interact with the common partner SMAD4. This SMAD complex translocates into the nucleus where it mediates activin-induced transcription. Inhibitory SMAD7, which is recruited to ACVR1B through FKBP1A, can prevent the association of SMAD2 and SMAD3 with the activin receptor complex, thereby blocking the activin signal. Activin signal transduction is also antagonized by the binding to the receptor of inhibin-B via the IGSF1 inhibin coreceptor. ACVR1B also phosphorylates TDP2. In Rattus norvegicus (Rat), this protein is Activin receptor type-1B (Acvr1b).